Here is a 324-residue protein sequence, read N- to C-terminus: Glyoxylate/hydroxypyruvate reductase B (324 aa).

Residues Arg237 and Glu266 contribute to the active site. His285 serves as the catalytic Proton donor.

It belongs to the D-isomer specific 2-hydroxyacid dehydrogenase family. GhrB subfamily. As to quaternary structure, homodimer.

The protein resides in the cytoplasm. It catalyses the reaction glycolate + NADP(+) = glyoxylate + NADPH + H(+). The enzyme catalyses (R)-glycerate + NAD(+) = 3-hydroxypyruvate + NADH + H(+). It carries out the reaction (R)-glycerate + NADP(+) = 3-hydroxypyruvate + NADPH + H(+). In terms of biological role, catalyzes the NADPH-dependent reduction of glyoxylate and hydroxypyruvate into glycolate and glycerate, respectively. The protein is Glyoxylate/hydroxypyruvate reductase B of Shigella flexneri.